We begin with the raw amino-acid sequence, 245 residues long: 7-cyano-7-deazaguanine synthase 2 (245 aa).

12 to 22 (FSGGQDSTTCL) lines the ATP pocket. The Zn(2+) site is built by Cys200, Cys215, Cys218, and Cys221.

Belongs to the QueC family. It depends on Zn(2+) as a cofactor.

The enzyme catalyses 7-carboxy-7-deazaguanine + NH4(+) + ATP = 7-cyano-7-deazaguanine + ADP + phosphate + H2O + H(+). The protein operates within purine metabolism; 7-cyano-7-deazaguanine biosynthesis. Its function is as follows. Catalyzes the ATP-dependent conversion of 7-carboxy-7-deazaguanine (CDG) to 7-cyano-7-deazaguanine (preQ(0)). This Mesorhizobium japonicum (strain LMG 29417 / CECT 9101 / MAFF 303099) (Mesorhizobium loti (strain MAFF 303099)) protein is 7-cyano-7-deazaguanine synthase 2.